We begin with the raw amino-acid sequence, 265 residues long: WUSCHEL-related homeobox 3B (265 aa).

The homeobox; WUS-type DNA-binding region spans 4-68; that stretch reads TPSTRWCPTP…NHKARERQRL (65 aa). Disordered regions lie at residues 77-107 and 242-265; these read QQQY…APPA and PTKS…TSTN. Low complexity predominate over residues 254 to 265; the sequence is SSKSSSCSTSTN.

This sequence belongs to the WUS homeobox family. As to expression, predominantly expressed in tissues enriched for shoot meristems and young lateral organ primordia. First expressed in lateral domains of shoot meristems. It is then expressed in the margins of young lateral organ primordia. Not expressed in roots, seedling leaves or fully expanded coleoptiles. Also expressed in vegetative shoot apices (five leaf primordia and the SAM) and in the male inflorescence. Expressed at high level in the female inflorescence.

Its subcellular location is the nucleus. Functionally, probable transcription factor required to initiate organ founder cells in a lateral domain of shoot meristems. Involved in leaf formation. This chain is WUSCHEL-related homeobox 3B (WOX3B), found in Zea mays (Maize).